A 348-amino-acid chain; its full sequence is Phosphatidylglycerophosphate phosphatase 1, chloroplastic/mitochondrial (348 aa).

A chloroplast and mitochondrion-targeting transit peptide spans 1 to 58 (MQTPSMAASTTSYYPIPKSFLLSPPRHKRNPNLISCSTKPICSPPPPSSSSSSPLQTT). A disordered region spans residues 17–67 (PKSFLLSPPRHKRNPNLISCSTKPICSPPPPSSSSSSPLQTTTTHRSQKQN). Positions 55-67 (LQTTTTHRSQKQN) are enriched in polar residues. The Phosphoryl acceptor motif lies at 184-188 (DKDNT).

It belongs to the HAD-like hydrolase superfamily. The cofactor is Mg(2+). As to expression, mainly expressed in inflorescences (especially in pollen) and, to a lower extent, in leaves, stems and siliques, as well as, at low levels, in roots. Mostly expressed in hypocotyl, vasculatures, trichomes, guard cells and stigmas.

It localises to the plastid. Its subcellular location is the chloroplast. The protein resides in the mitochondrion. The catalysed reaction is a 1,2-diacyl-sn-glycero-3-phospho-(1'-sn-glycero-3'-phosphate) + H2O = a 1,2-diacyl-sn-glycero-3-phospho-(1'-sn-glycerol) + phosphate. It participates in phospholipid metabolism; phosphatidylglycerol biosynthesis; phosphatidylglycerol from CDP-diacylglycerol: step 2/2. Functionally, phosphatidylglycerophosphate (PGP) phosphatase involved in the biosynthesis of phosphatidylglycerol (PG), a phosphoglycerolipid predominantly present in chloroplastic thylakoid membranes and which has important photosynthetic function; seems to use PGP 34:3, PGP 34:2 and PGP 34:1 as substrates. Required for thylakoid membranes development and chloroplast function. Necessary for normal cell growth. Required for root growth and columella cells organization. The protein is Phosphatidylglycerophosphate phosphatase 1, chloroplastic/mitochondrial of Arabidopsis thaliana (Mouse-ear cress).